The following is a 137-amino-acid chain: Small ribosomal subunit protein uS11 (137 aa).

The interval 1 to 25 (MADRRRGAARGGAARPRRRERKNIP) is disordered. Basic residues predominate over residues 15 to 25 (RPRRRERKNIP).

It belongs to the universal ribosomal protein uS11 family. Part of the 30S ribosomal subunit. Interacts with proteins S7 and S18. Binds to IF-3.

Functionally, located on the platform of the 30S subunit, it bridges several disparate RNA helices of the 16S rRNA. Forms part of the Shine-Dalgarno cleft in the 70S ribosome. This is Small ribosomal subunit protein uS11 from Thermomicrobium roseum (strain ATCC 27502 / DSM 5159 / P-2).